A 223-amino-acid polypeptide reads, in one-letter code: Cytochrome c biogenesis ATP-binding export protein CcmA (223 aa).

Residues 1 to 223 (MRSLACERDE…KSDMAVGNDY (223 aa)) enclose the ABC transporter domain. ATP is bound at residue 31–38 (GSNGAGKT).

It belongs to the ABC transporter superfamily. CcmA exporter (TC 3.A.1.107) family. As to quaternary structure, the complex is composed of two ATP-binding proteins (CcmA) and two transmembrane proteins (CcmB).

The protein localises to the cell inner membrane. The catalysed reaction is heme b(in) + ATP + H2O = heme b(out) + ADP + phosphate + H(+). Its function is as follows. Part of the ABC transporter complex CcmAB involved in the biogenesis of c-type cytochromes; once thought to export heme, this seems not to be the case, but its exact role is uncertain. Responsible for energy coupling to the transport system. In Saccharophagus degradans (strain 2-40 / ATCC 43961 / DSM 17024), this protein is Cytochrome c biogenesis ATP-binding export protein CcmA.